A 425-amino-acid chain; its full sequence is Pleckstrin homology domain-containing family A member 2 (425 aa).

The PH 1 domain maps to 7–113 (QNRICGFLDI…WVEALNQASK (107 aa)). Residue Lys141 forms a Glycyl lysine isopeptide (Lys-Gly) (interchain with G-Cter in SUMO2) linkage. Phosphoserine is present on Ser184. The PH 2 domain maps to 198–298 (PLIKSGYCVK…WIKEIGAAVQ (101 aa)). Phosphoserine occurs at positions 314 and 349. The tract at residues 374 to 410 (AEDSLFTPRLGESSTSAVLPSSRIRHRSEPQHPKEKP) is disordered. The span at 400–410 (RSEPQHPKEKP) shows a compositional bias: basic and acidic residues.

As to quaternary structure, binds MPDZ and PTPN13.

The protein localises to the cytoplasm. The protein resides in the cell membrane. Its subcellular location is the nucleus. Functionally, binds specifically to phosphatidylinositol 3,4-diphosphate (PtdIns3,4P2), but not to other phosphoinositides. May recruit other proteins to the plasma membrane. The chain is Pleckstrin homology domain-containing family A member 2 (PLEKHA2) from Bos taurus (Bovine).